A 240-amino-acid polypeptide reads, in one-letter code: Coiled-coil domain-containing protein 152 (240 aa).

Residues 55 to 223 (MQTKEVAMKQ…LEQRLSVSKD (169 aa)) are a coiled coil.

This is Coiled-coil domain-containing protein 152 (CCDC152) from Bos taurus (Bovine).